We begin with the raw amino-acid sequence, 599 residues long: Major centromere autoantigen B (599 aa).

At Gly2 the chain carries N,N,N-trimethylglycine; alternate. Gly2 carries the n,N-dimethylglycine; alternate modification. At Gly2 the chain carries N-methylglycine; alternate. The HTH psq-type domain occupies 2–52 (GPKRRQLTFREKSRIIQEVEENPDLRKGEIARRFNIPPSTLSTILKNKRAI). 2 DNA-binding regions (H-T-H motif) span residues 28-48 (KGEI…ILKN) and 97-129 (GIIL…FRRR). In terms of domain architecture, HTH CENPB-type spans 65–136 (CRKTNKLSPY…RRRHGVVSCS (72 aa)). Residues 143–184 (ARNAAPRTPAAPASPAAVPSEGSGGSTTGWRAREEQPPSVAE) form a disordered region. Positions 144–159 (RNAAPRTPAAPASPAA) are enriched in low complexity. Phosphoserine is present on residues Ser156 and Ser165. Lys246 participates in a covalent cross-link: Glycyl lysine isopeptide (Lys-Gly) (interchain with G-Cter in SUMO2). Disordered stretches follow at residues 387-475 (AGFG…EAED) and 495-544 (EAQC…VPSF). Phosphothreonine is present on residues Thr396 and Thr398. Composition is skewed to acidic residues over residues 405 to 475 (GEEE…EAED) and 506 to 538 (GGED…DGDE). Positions 536–599 (GDEVPVPSFG…AGVRGLGHQS (64 aa)) are homodimerization.

As to quaternary structure, antiparallel homodimer. Interacts with CENPT. Identified in a centromere complex containing histones H2A, H2B and H4, and at least CENPA, CENPB, CENPC, CENPT, CENPN, HJURP, SUPT16H, SSRP1 and RSF1. In terms of processing, poly-ADP-ribosylated by PARP1. Post-translationally, N-terminally methylated by METTL11A/NTM1. Alpha-N-methylation is stimulated in response to extracellular stimuli, including increased cell density and heat shock, and seems to facilitate binding to CENP-B boxes. Chromatin-bound CENP-B is primarily trimethylated.

The protein resides in the nucleus. It localises to the chromosome. It is found in the centromere. Interacts with centromeric heterochromatin in chromosomes and binds to a specific 17 bp subset of alphoid satellite DNA, called the CENP-B box. May organize arrays of centromere satellite DNA into a higher-order structure which then directs centromere formation and kinetochore assembly in mammalian chromosomes. This chain is Major centromere autoantigen B (CENPB), found in Homo sapiens (Human).